Consider the following 396-residue polypeptide: L-lactate dehydrogenase (396 aa).

The FMN hydroxy acid dehydrogenase domain occupies Met-1 to Gly-380. Tyr-24 provides a ligand contact to substrate. FMN is bound by residues Ser-106 and Gln-127. Residue Tyr-129 coordinates substrate. Residue Thr-155 participates in FMN binding. Arg-164 serves as a coordination point for substrate. An FMN-binding site is contributed by Lys-251. His-275 (proton acceptor) is an active-site residue. Arg-278 is a binding site for substrate. Asp-306–Arg-330 is a binding site for FMN.

It belongs to the FMN-dependent alpha-hydroxy acid dehydrogenase family. FMN serves as cofactor.

The protein resides in the cell inner membrane. It catalyses the reaction (S)-lactate + A = pyruvate + AH2. Functionally, catalyzes the conversion of L-lactate to pyruvate. Is coupled to the respiratory chain. The sequence is that of L-lactate dehydrogenase from Shigella boydii serotype 18 (strain CDC 3083-94 / BS512).